The primary structure comprises 320 residues: Cyclin-D6-1 (320 aa).

Residues 279-320 (HHRSASSESERTTTVGSAANSADAKRRCMGPPRQWGVGGPDE) form a disordered region.

It belongs to the cyclin family. Cyclin D subfamily.

The protein is Cyclin-D6-1 (CYCD6-1) of Oryza sativa subsp. japonica (Rice).